The primary structure comprises 197 residues: Putative double homeobox protein 3 (197 aa).

2 DNA-binding regions (homeobox) span residues 46-105 (GRRM…LRQH) and 121-180 (GRRK…WGQS). The tract at residues 102–127 (LRQHRRQSRPWPGRRDPQKGRRKRTA) is disordered.

It belongs to the paired homeobox family. Expressed in hepatoma Hep3B cells.

The protein localises to the nucleus. This chain is Putative double homeobox protein 3 (DUX3), found in Homo sapiens (Human).